The chain runs to 1141 residues: MAELVTSPAYRAYLDGLIAGLDRAMEIANKAKSLGVDPRPYVEIPIASDLAGRVEALLGYKGVAAKIRELEDRMSREEAALKIGDAFVGKEFGESTREDILDHAIRTSMALLTEGVVAAPTEGIGKVAVRRNDDGTEYLSIYYAGPIRSAGGTAQALSVLVGDYVRRLLNIDRYKPREEEIERYVEEIKQYNNIQSMQYLPKDDDIRLIIRNCPICIDGEPTEQEEISGYRNLERVETNVVRGGMGLVIAEGIGLKAPKIQKNVAKMNLDGWEWLEELISGNTPAQEVEEEPGVHPKDKYMRDMLAGRPSFSYPMRKGGFRFRLGRCRNTGLATCGFNPATLHILDDYLAVGTQMKVERPGKACGVVPCTDIEGPTVRLKSGELRRIDTLDDANKYYDQVEYILDIGEILISFGEFMENNHVLMPPSYCEEWWIQEGGPRHPKNEAEALSFVLEGAYLHPDYTWFWDDCSEGQLIFLSDKVAGTGSLREGVLYIPEDPAVKSVLEELLVPHTVEEGFYVVRTPLALIMGLGLTDTLAKSPTWKTLPPFSNGLSMAISLSGLKMRSKAGTRVGGRMGRPGKSAPRKMKPPVHVLFPIGESGGMKRSIDNAAKICSSDSEENFRGTSVTTGQVEGLIQVQTGERRCPKCGTVTFKSRCADCGTHTDAVYRCPHCNQLGEEGQESCPKCGANLVCSKESIVSLGQEYAAALKNVGMSASSSPELKGVRGLISRERVVEPLEKGLLRAKNNIFVFRDGTIRYDMIDLPLTHFRPAEVGVSVEKLRSIGYTQDMHGADLTDASQLVELHPQDIMVSVDCGEYLVRVAAYVDELLEKVYGMEAFYHVKTPEDLVGHLVMGLAPHTSAGVLARIVGFTKAKAGYAHPYYHAAKRRNCDGDEDCVMLLMDGLLNFSRSFLPSTRGGTMDAPLVLTTTLNPKEVDKETLNVDVMPRYPLEVYTACLTYRAPKEVGKFVDYVEKRVETPGQFEGFSFTHDTTDISEGPIDTMYTNPILKGTADKIKAELGLADRIRAVDTNDLAERIINSHLMPDMIGNLRSFSKQAFRCPKCKTSYRRIPVSGKCNKCGGPVKATMHKGNVTKYLEISKYMAEHYTLSDYTNQRIQVTEMNINSTFGEEEKVQMDLSDFF.

Residues 567–587 (AGTRVGGRMGRPGKSAPRKMK) are disordered.

The protein belongs to the archaeal DNA polymerase II family. In terms of assembly, heterodimer of a large subunit and a small subunit.

The enzyme catalyses DNA(n) + a 2'-deoxyribonucleoside 5'-triphosphate = DNA(n+1) + diphosphate. It carries out the reaction Exonucleolytic cleavage in the 3'- to 5'-direction to yield nucleoside 5'-phosphates.. Possesses two activities: a DNA synthesis (polymerase) and an exonucleolytic activity that degrades single-stranded DNA in the 3'- to 5'-direction. Has a template-primer preference which is characteristic of a replicative DNA polymerase. In Methanocorpusculum labreanum (strain ATCC 43576 / DSM 4855 / Z), this protein is DNA polymerase II large subunit.